The primary structure comprises 371 residues: uncharacterized protein (371 aa).

Solcar repeat units follow at residues 3–98 (DDSL…CKVL), 131–276 (RYWG…FKSF), and 284–369 (KSNF…VRKW). The next 6 helical transmembrane spans lie at 9–29 (AIAG…LDVV), 73–93 (GVGP…VVYE), 137–157 (IFSA…IWVV), 253–273 (LFPS…YEYF), 290–310 (VLAA…HEVL), and 341–362 (YYSG…TFLS).

Belongs to the mitochondrial carrier (TC 2.A.29) family.

It is found in the mitochondrion inner membrane. This is an uncharacterized protein from Schizosaccharomyces pombe (strain 972 / ATCC 24843) (Fission yeast).